Consider the following 167-residue polypeptide: S-ribosylhomocysteine lyase (167 aa).

Residues histidine 54, histidine 58, and cysteine 128 each coordinate Fe cation.

The protein belongs to the LuxS family. As to quaternary structure, homodimer. Requires Fe cation as cofactor.

The catalysed reaction is S-(5-deoxy-D-ribos-5-yl)-L-homocysteine = (S)-4,5-dihydroxypentane-2,3-dione + L-homocysteine. In terms of biological role, involved in the synthesis of autoinducer 2 (AI-2) which is secreted by bacteria and is used to communicate both the cell density and the metabolic potential of the environment. The regulation of gene expression in response to changes in cell density is called quorum sensing. Catalyzes the transformation of S-ribosylhomocysteine (RHC) to homocysteine (HC) and 4,5-dihydroxy-2,3-pentadione (DPD). This is S-ribosylhomocysteine lyase from Haemophilus influenzae (strain PittEE).